We begin with the raw amino-acid sequence, 301 residues long: Acetylglutamate kinase (301 aa).

Residues 71 to 72 (GG), arginine 93, and asparagine 198 contribute to the substrate site.

It belongs to the acetylglutamate kinase family. ArgB subfamily.

It localises to the cytoplasm. The catalysed reaction is N-acetyl-L-glutamate + ATP = N-acetyl-L-glutamyl 5-phosphate + ADP. Its pathway is amino-acid biosynthesis; L-arginine biosynthesis; N(2)-acetyl-L-ornithine from L-glutamate: step 2/4. Its function is as follows. Catalyzes the ATP-dependent phosphorylation of N-acetyl-L-glutamate. In Zymomonas mobilis subsp. mobilis (strain ATCC 31821 / ZM4 / CP4), this protein is Acetylglutamate kinase.